The primary structure comprises 372 residues: Anhydro-N-acetylmuramic acid kinase (372 aa).

21-28 (GTSMDGVD) is an ATP binding site.

This sequence belongs to the anhydro-N-acetylmuramic acid kinase family.

The catalysed reaction is 1,6-anhydro-N-acetyl-beta-muramate + ATP + H2O = N-acetyl-D-muramate 6-phosphate + ADP + H(+). It participates in amino-sugar metabolism; 1,6-anhydro-N-acetylmuramate degradation. Its pathway is cell wall biogenesis; peptidoglycan recycling. In terms of biological role, catalyzes the specific phosphorylation of 1,6-anhydro-N-acetylmuramic acid (anhMurNAc) with the simultaneous cleavage of the 1,6-anhydro ring, generating MurNAc-6-P. Is required for the utilization of anhMurNAc either imported from the medium or derived from its own cell wall murein, and thus plays a role in cell wall recycling. The sequence is that of Anhydro-N-acetylmuramic acid kinase from Bordetella avium (strain 197N).